The chain runs to 107 residues: Nucleoid-associated protein Rru_A3472 (107 aa).

Belongs to the YbaB/EbfC family. In terms of assembly, homodimer.

The protein resides in the cytoplasm. It localises to the nucleoid. Binds to DNA and alters its conformation. May be involved in regulation of gene expression, nucleoid organization and DNA protection. The polypeptide is Nucleoid-associated protein Rru_A3472 (Rhodospirillum rubrum (strain ATCC 11170 / ATH 1.1.1 / DSM 467 / LMG 4362 / NCIMB 8255 / S1)).